We begin with the raw amino-acid sequence, 124 residues long: Protein MGF 110-4L-B (124 aa).

Positions 1-18 (MLVIFLGILGLLANQVLG) are cleaved as a signal peptide. Asn-64 is a glycosylation site (N-linked (GlcNAc...) asparagine; by host). A Prevents secretion from ER motif is present at residues 121–124 (KEDL).

This sequence belongs to the asfivirus MGF 110 family.

The protein resides in the virion. It is found in the host endoplasmic reticulum-Golgi intermediate compartment. In terms of biological role, causes the redistribution of lumenal ER protein to an enlarged ERGIC compartment. The polypeptide is Protein MGF 110-4L-B (African swine fever virus (isolate Portugal/Lis 57/1957) (ASFV)).